We begin with the raw amino-acid sequence, 210 residues long: Probable GTP-binding protein EngB (210 aa).

In terms of domain architecture, EngB-type G spans 25–199 (TGIEVAFAGR…RQKLDTWFSE (175 aa)). GTP is bound by residues 33–40 (GRSNAGKS), 60–64 (GRTQL), 78–81 (DLPG), 145–148 (TKAD), and 178–180 (FSS). S40 and T62 together coordinate Mg(2+).

It belongs to the TRAFAC class TrmE-Era-EngA-EngB-Septin-like GTPase superfamily. EngB GTPase family. The cofactor is Mg(2+).

In terms of biological role, necessary for normal cell division and for the maintenance of normal septation. This chain is Probable GTP-binding protein EngB, found in Shigella flexneri.